Here is a 375-residue protein sequence, read N- to C-terminus: Heat shock protein 42 (375 aa).

4 disordered regions span residues 21-59 (TGQR…HPLY), 81-127 (SPEY…YYHC), 154-238 (PYEG…ETRM), and 347-375 (PKPK…TVEN). A compositionally biased stretch (low complexity) spans 22-48 (GQRGQQGYPRQPQRPQRYHPHYGQVHV). The span at 49 to 58 (GGHHPRHHPL) shows a compositional bias: basic residues. Acidic residues-rich tracts occupy residues 85–101 (GYDD…EDMV) and 158–168 (TEPEIEANTEQ). Residues 169-197 (EGEKGEEKDKKDKSEAPKEEAGETNKEKP) show a composition bias toward basic and acidic residues. A phosphoserine mark is found at serine 182, serine 213, serine 214, serine 215, and serine 223. A sHSP domain is found at 237 to 356 (RMDLPFSPEV…PKPKKRIAIE (120 aa)). A compositionally biased stretch (acidic residues) spans 357–367 (EIPDEELEFEE).

This sequence belongs to the small heat shock protein (HSP20) family. Forms oligomeric complexes. Interacts with itself.

The sequence is that of Heat shock protein 42 (HSP42) from Saccharomyces cerevisiae (strain ATCC 204508 / S288c) (Baker's yeast).